We begin with the raw amino-acid sequence, 451 residues long: Uronate isomerase (451 aa).

Belongs to the metallo-dependent hydrolases superfamily. Uronate isomerase family.

It carries out the reaction D-glucuronate = D-fructuronate. It catalyses the reaction aldehydo-D-galacturonate = keto-D-tagaturonate. It functions in the pathway carbohydrate metabolism; pentose and glucuronate interconversion. This chain is Uronate isomerase, found in Thermotoga neapolitana (strain ATCC 49049 / DSM 4359 / NBRC 107923 / NS-E).